A 383-amino-acid polypeptide reads, in one-letter code: uncharacterized protein (383 aa).

Residues 1–23 (MKLTSIPIASTLLSLLAASGTLA) form the signal peptide.

Belongs to the but2 family.

The protein resides in the cytoplasm. Its subcellular location is the nucleus. This is an uncharacterized protein from Schizosaccharomyces pombe (strain 972 / ATCC 24843) (Fission yeast).